A 118-amino-acid polypeptide reads, in one-letter code: MHRCVGGVCVSLIVCAFLTETLGMVIAAKEKRGWTLNSAGYLLGPHAIDSHRSLSDKHGLAGKREMPLDEDFKTGALRIADEDVVHTIIDFLSYLKLKEIGALDSLPSSLTSEEISQP.

Residues 1-19 form the signal peptide; it reads MHRCVGGVCVSLIVCAFLT. A propeptide spanning residues 20–30 is cleaved from the precursor; sequence ETLGMVIAAKE. Alanine amide is present on Ala61.

The protein belongs to the galanin family. As to expression, strongly expressed in brain and stomach, moderately in the eye, and very weakly in heart, kidney and gills. Not detected in liver.

The protein resides in the secreted. In terms of biological role, endocrine hormone of the central and peripheral nervous systems that binds and activates the G protein-coupled receptors GALR1 (galr1a and galr1b) and GALR2 (galr2a and galr2b). This small neuropeptide may regulate diverse physiologic functions including contraction of smooth muscle of the gastrointestinal and genitourinary tract, growth hormone and insulin release and adrenal secretion. The polypeptide is Galanin peptides (Danio rerio (Zebrafish)).